Here is a 184-residue protein sequence, read N- to C-terminus: UPF0340 protein TTE0860 (184 aa).

It belongs to the UPF0340 family.

The polypeptide is UPF0340 protein TTE0860 (Caldanaerobacter subterraneus subsp. tengcongensis (strain DSM 15242 / JCM 11007 / NBRC 100824 / MB4) (Thermoanaerobacter tengcongensis)).